Reading from the N-terminus, the 245-residue chain is Haloacid dehalogenase-like hydrolase domain-containing protein At2g33255 (245 aa).

Thr-2 bears the N-acetylalanine mark. The active-site Nucleophile is Asp-39. Asp-39, Asp-41, and Asp-186 together coordinate Mg(2+). Asp-41 acts as the Proton donor in catalysis.

Belongs to the HAD-like hydrolase superfamily. DOG/GPP family. It depends on Mg(2+) as a cofactor.

In Arabidopsis thaliana (Mouse-ear cress), this protein is Haloacid dehalogenase-like hydrolase domain-containing protein At2g33255.